We begin with the raw amino-acid sequence, 103 residues long: MASMTMTATFFPAVAKVPSATGGRRLSVVRASTSDNTPSLEVKEQSSTTMRRDLMFTAAAAAVCSLAKVAMAEEEEPKRGTEAAKKKYAQVCVTMPTAKICRY.

The N-terminal 75 residues, 1 to 75 (MASMTMTATF…LAKVAMAEEE (75 aa)), are a transit peptide targeting the chloroplast.

In terms of processing, the maturation of the PSII-T precursor to its final form occurs through a two step process. First, a stromal intermediate is formed, which, upon translocation into the thylakoid membrane, is processed to the mature protein.

Its subcellular location is the plastid. It is found in the chloroplast thylakoid membrane. In terms of biological role, may be a component of the oxygen-evolving complex. This Arabidopsis thaliana (Mouse-ear cress) protein is Photosystem II 5 kDa protein, chloroplastic (PSBT).